The primary structure comprises 325 residues: Ribosomal RNA small subunit methyltransferase H (325 aa).

S-adenosyl-L-methionine contacts are provided by residues 41–43 (GGH), aspartate 60, tyrosine 87, aspartate 108, and glutamine 115. Positions 295-325 (DDDEKAANPRAAPVRLRAAERTRASEDRRGS) are disordered. The span at 311-325 (RAAERTRASEDRRGS) shows a compositional bias: basic and acidic residues.

Belongs to the methyltransferase superfamily. RsmH family.

The protein localises to the cytoplasm. It catalyses the reaction cytidine(1402) in 16S rRNA + S-adenosyl-L-methionine = N(4)-methylcytidine(1402) in 16S rRNA + S-adenosyl-L-homocysteine + H(+). In terms of biological role, specifically methylates the N4 position of cytidine in position 1402 (C1402) of 16S rRNA. The polypeptide is Ribosomal RNA small subunit methyltransferase H (Leifsonia xyli subsp. xyli (strain CTCB07)).